Here is a 297-residue protein sequence, read N- to C-terminus: Calponin-1 (297 aa).

A Calponin-homology (CH) domain is found at 28 to 131; that stretch reads HQREQELREW…STLLALASMA (104 aa). Calponin-like repeat units follow at residues 164 to 189, 204 to 229, and 243 to 268; these read IGLQ…RHLY, ISLQ…RQIF, and VSLQ…RQVY. Threonine 170 carries the phosphothreonine; by ROCK2 modification. Serine 175 bears the Phosphoserine; by ROCK2 mark. Threonine 180 and threonine 184 each carry phosphothreonine; by ROCK2. At threonine 259 the chain carries Phosphothreonine; by ROCK2.

The protein belongs to the calponin family. In terms of assembly, part of cGMP kinase signaling complex at least composed of ACTA2/alpha-actin, CNN1/calponin H1, PLN/phospholamban, PRKG1 and ITPR1. As to expression, smooth muscle, and tissues containing significant amounts of smooth muscle.

Functionally, thin filament-associated protein that is implicated in the regulation and modulation of smooth muscle contraction. It is capable of binding to actin, calmodulin and tropomyosin. The interaction of calponin with actin inhibits the actomyosin Mg-ATPase activity. The chain is Calponin-1 (Cnn1) from Mus musculus (Mouse).